A 206-amino-acid chain; its full sequence is Endoplasmic reticulum transmembrane protein 1 (206 aa).

Topologically, residues Met-1–Thr-7 are lumenal. The chain crosses the membrane as a helical span at residues Leu-8–Phe-28. At Arg-29 to Gln-45 the chain is on the cytoplasmic side. A helical transmembrane segment spans residues Gln-46 to Trp-66. The Lumenal portion of the chain corresponds to Lys-67–Asn-104. The chain crosses the membrane as a helical span at residues Met-105–Val-125. Residues Lys-126–Asn-206 are Cytoplasmic-facing. The interval Lys-140–Gln-163 is disordered. The segment covering Ser-150–Gln-163 has biased composition (basic and acidic residues). A Glycyl lysine isopeptide (Lys-Gly) (interchain with G-Cter in ubiquitin) cross-link involves residue Lys-190. A Di-lysine motif motif is present at residues Lys-203 to Asn-206.

Belongs to the BCAP29/BCAP31 family.

The protein resides in the endoplasmic reticulum membrane. May play a role in anterograde transport of membrane proteins from the endoplasmic reticulum to the Golgi. The protein is Endoplasmic reticulum transmembrane protein 1 (YET1) of Saccharomyces cerevisiae (strain ATCC 204508 / S288c) (Baker's yeast).